The following is a 343-amino-acid chain: Protein RecA (343 aa).

Residue glycine 64–threonine 71 participates in ATP binding.

The protein belongs to the RecA family.

It is found in the cytoplasm. Can catalyze the hydrolysis of ATP in the presence of single-stranded DNA, the ATP-dependent uptake of single-stranded DNA by duplex DNA, and the ATP-dependent hybridization of homologous single-stranded DNAs. It interacts with LexA causing its activation and leading to its autocatalytic cleavage. This chain is Protein RecA, found in Bacillus thuringiensis (strain Al Hakam).